The chain runs to 458 residues: Argininosuccinate lyase (458 aa).

This sequence belongs to the lyase 1 family. Argininosuccinate lyase subfamily.

Its subcellular location is the cytoplasm. The catalysed reaction is 2-(N(omega)-L-arginino)succinate = fumarate + L-arginine. Its pathway is amino-acid biosynthesis; L-arginine biosynthesis; L-arginine from L-ornithine and carbamoyl phosphate: step 3/3. The polypeptide is Argininosuccinate lyase (Salmonella dublin (strain CT_02021853)).